Reading from the N-terminus, the 102-residue chain is Small ribosomal subunit protein uS10 (102 aa).

This sequence belongs to the universal ribosomal protein uS10 family. Part of the 30S ribosomal subunit.

In terms of biological role, involved in the binding of tRNA to the ribosomes. The polypeptide is Small ribosomal subunit protein uS10 (Thermosipho africanus (strain TCF52B)).